The primary structure comprises 90 residues: Small ribosomal subunit protein bS16 (90 aa).

This sequence belongs to the bacterial ribosomal protein bS16 family.

This is Small ribosomal subunit protein bS16 from Geobacillus thermodenitrificans (strain NG80-2).